The sequence spans 485 residues: Alginate biosynthesis protein AlgA (485 aa).

It belongs to the mannose-6-phosphate isomerase type 2 family. In terms of assembly, monomer. Co(2+) serves as cofactor.

The enzyme catalyses D-mannose 6-phosphate = D-fructose 6-phosphate. It carries out the reaction alpha-D-mannose 1-phosphate + GTP + H(+) = GDP-alpha-D-mannose + diphosphate. The protein operates within nucleotide-sugar biosynthesis; GDP-alpha-D-mannose biosynthesis; GDP-alpha-D-mannose from alpha-D-mannose 1-phosphate (GTP route): step 1/1. It participates in nucleotide-sugar biosynthesis; GDP-alpha-D-mannose biosynthesis; alpha-D-mannose 1-phosphate from D-fructose 6-phosphate: step 1/2. Its function is as follows. Produces a precursor for alginate polymerization. The alginate layer provides a protective barrier against host immune defenses and antibiotics. This is Alginate biosynthesis protein AlgA (algA) from Pseudomonas putida (strain ATCC 47054 / DSM 6125 / CFBP 8728 / NCIMB 11950 / KT2440).